The following is a 244-amino-acid chain: Nodulation protein G (244 aa).

11-35 (VTGASGAIGGAIARVLHAQGAIVGL) contributes to the NAD(+) binding site. Substrate is bound at residue serine 139. The active-site Proton acceptor is the tyrosine 152.

It belongs to the short-chain dehydrogenases/reductases (SDR) family.

Its function is as follows. Proposed to modify Nod factor fatty acyl chain. This Rhizobium meliloti (Ensifer meliloti) protein is Nodulation protein G (nodG).